Consider the following 270-residue polypeptide: Esterase (270 aa).

Catalysis depends on charge relay system residues Ser-127, Asp-216, and His-244.

This sequence belongs to the LovG family.

Its pathway is mycotoxin biosynthesis. Functionally, esterase; part of the gene cluster that mediates the biosynthesis of the selective antifungal agent ascochitine, an o-quinone methide that plays a possible protective role against other microbial competitors in nature and is considered to be important for pathogenicity of legume-associated Didymella species. The pathway probably begins with the synthesis of a keto-aldehyde intermediate by the ascochitine non-reducing polyketide synthase pksAC from successive condensations of 4 malonyl-CoA units, presumably with a simple acetyl-CoA starter unit. Release of the keto-aldehyde intermediate is consistent with the presence of the C-terminal reductive release domain. The HR-PKS (orf7) probably makes a diketide starter unit which is passed to the non-reducing polyketide synthase pksAC for further extension, producing ascochital and ascochitine. The aldehyde dehydrogenase (orf1), the 2-oxoglutarate-dependent dioxygenase (orf3) and the dehydrogenase (orf9) are probably involved in subsequent oxidations of methyl groups to the carboxylic acid of the heterocyclic ring. The ascochitine gene cluster also includes a gene encoding a short peptide with a cupin domain (orf2) that is often found in secondary metabolite gene clusters and which function has still to be determined. The protein is Esterase of Didymella fabae (Leaf and pod spot disease fungus).